The primary structure comprises 308 residues: uncharacterized protein (308 aa).

In terms of domain architecture, S4 RNA-binding spans 11 to 87; that stretch reads KRLDSLLASL…LKLEVLFEDK (77 aa). Asp131 is a catalytic residue.

It belongs to the pseudouridine synthase RluA family.

It catalyses the reaction a uridine in RNA = a pseudouridine in RNA. This is an uncharacterized protein from Mycoplasma genitalium (strain ATCC 33530 / DSM 19775 / NCTC 10195 / G37) (Mycoplasmoides genitalium).